A 393-amino-acid polypeptide reads, in one-letter code: Branched-chain amino acid aminotransferase 1, mitochondrial (393 aa).

The transit peptide at 1–34 (MIHRGLWLHNLVQSYRVGSSSSSSTLFKLVYRYN) directs the protein to the mitochondrion. Arginine 138 contributes to the pyridoxal 5'-phosphate binding site. The active-site Proton acceptor is the lysine 240. The residue at position 240 (lysine 240) is an N6-(pyridoxal phosphate)lysine. Glutamate 276 contributes to the pyridoxal 5'-phosphate binding site.

This sequence belongs to the class-IV pyridoxal-phosphate-dependent aminotransferase family. Requires pyridoxal 5'-phosphate as cofactor. In terms of tissue distribution, expressed specifically in lupulin glands.

The protein resides in the mitochondrion. It carries out the reaction L-isoleucine + 2-oxoglutarate = (S)-3-methyl-2-oxopentanoate + L-glutamate. The enzyme catalyses L-leucine + 2-oxoglutarate = 4-methyl-2-oxopentanoate + L-glutamate. The catalysed reaction is L-valine + 2-oxoglutarate = 3-methyl-2-oxobutanoate + L-glutamate. The protein operates within amino-acid biosynthesis; L-isoleucine biosynthesis; L-isoleucine from 2-oxobutanoate: step 4/4. Its pathway is amino-acid biosynthesis; L-leucine biosynthesis; L-leucine from 3-methyl-2-oxobutanoate: step 4/4. It participates in amino-acid biosynthesis; L-valine biosynthesis; L-valine from pyruvate: step 4/4. Functionally, converts 2-oxo acids to branched-chain amino acids (BCAA). Shows no kinetic preferences corresponding to anabolic or catabolic functions, but likely involved in BCAA catabolism. This is Branched-chain amino acid aminotransferase 1, mitochondrial from Humulus lupulus (European hop).